The primary structure comprises 351 residues: CCN family member 3 (351 aa).

The N-terminal stretch at 1-21 (MSVFLRKQCLCLGFLLLHLLN) is a signal peptide. Residues 25–99 (ATLRCPSRCP…NNETGICMVP (75 aa)) enclose the IGFBP N-terminal domain. 6 disulfide bridges follow: Cys-29–Cys-55, Cys-33–Cys-57, Cys-37–Cys-58, Cys-44–Cys-61, Cys-69–Cys-83, and Cys-75–Cys-96. N-linked (GlcNAc...) asparagine glycosylation occurs at Asn-91. In terms of domain architecture, VWFC spans 102–168 (DNCVFDGVIY…GECCEKWTCG (67 aa)). In terms of domain architecture, TSP type-1 spans 199–244 (NCIEQTTEWSACSKSCGMGLSTRVTNRNLQCEMVKQTRLCMVRPCE). Cys-238 carries the S-palmitoyl cysteine lipid modification. 5 cysteine pairs are disulfide-bonded: Cys-258-Cys-295, Cys-275-Cys-309, Cys-286-Cys-325, Cys-289-Cys-327, and Cys-294-Cys-331. One can recognise a CTCK domain in the interval 258-332 (CLRTKKSLKS…GTCTCHSNCP (75 aa)). N-linked (GlcNAc...) asparagine glycosylation is present at Asn-274.

Belongs to the CCN family. Interacts with FBLN1. Interacts (via CTCK domain) with NOTCH1 (via the EGF-like repeat region). Interacts with GJA1/CX43. Interacts with ITGA5:ITGB1, ITGAV:ITGB3 and ITGAV:ITGB5. Interacts with ZDHHC22; the interaction may lead to CCN3 palmitoylation. In terms of processing, may be palmitoylated on Cys-238, which is important for extracellular secretion. As to expression, widely expressed. Highly expressed in neurons of dorsal root ganglia and dorsal horn of the spinal cord (at protein level). Expressed in astrocytes (at protein level). In cartilage, dominantly expressed in the chondrocyte territorial matrix.

The protein resides in the secreted. It is found in the cytoplasm. Its subcellular location is the cell junction. The protein localises to the gap junction. Immediate-early protein playing a role in various cellular processes including proliferation, adhesion, migration, differentiation and survival. Acts by binding to integrins or membrane receptors such as NOTCH1. Essential regulator of hematopoietic stem and progenitor cell function. Inhibits myogenic differentiation through the activation of Notch-signaling pathway. Inhibits vascular smooth muscle cells proliferation by increasing expression of cell-cycle regulators such as CDKN2B or CDKN1A independently of TGFB1 signaling. Ligand of integrins ITGAV:ITGB3 and ITGA5:ITGB1, acts directly upon endothelial cells to stimulate pro-angiogenic activities and induces angiogenesis. In endothelial cells, supports cell adhesion, induces directed cell migration (chemotaxis) and promotes cell survival. Also plays a role in cutaneous wound healing acting as integrin receptor ligand. Supports skin fibroblast adhesion through ITGA5:ITGB1 and ITGA6:ITGB1 and induces fibroblast chemotaxis through ITGAV:ITGB5. Seems to enhance bFGF-induced DNA synthesis in fibroblasts. Involved in bone regeneration as a negative regulator. Enhances the articular chondrocytic phenotype, whereas it repressed the one representing endochondral ossification. Impairs pancreatic beta-cell function, inhibits beta-cell proliferation and insulin secretion. Plays a role as negative regulator of endothelial pro-inflammatory activation reducing monocyte adhesion, its anti-inflammatory effects occur secondary to the inhibition of NF-kappaB signaling pathway. Contributes to the control and coordination of inflammatory processes in atherosclerosis. Attenuates inflammatory pain through regulation of IL1B- and TNF-induced MMP9, MMP2 and CCL2 expression. Inhibits MMP9 expression through ITGB1 engagement. Brain osteoanabolic hormone. During lactation, maintains the maternal skeleton and viability of offspring. In Rattus norvegicus (Rat), this protein is CCN family member 3 (Ccn3).